The primary structure comprises 531 residues: MKTLVYKEIKEKLGRDFILENPKNKNLAHFATPLAFSLAKELKQNPMIIANDIVVKLKDCDCFESVEALNGYVNFKLSKAFLNSLATQALSDSENFAKDDKKEQSFLLEYVSANPTGPLHIGHARGAIFGDTLTRVARHLGYKFDTEYYVNDAGNQIYLLGLSILLAVKEHCLKEQVQYPDEYYKGEYIIDVAKEAFAEFEKDFFVEENIPQLALWAKDKMLKIIKQNLADAKIFIDAYVSETSYYSELENTLKALKEHGGTYEQDGKIWLASSVKGDEKDRVIIKDDGKGTYLAADIVYHKDKMSRGYDKCINIWGADHHGYIARMKAAMEFLGHDSQNLEIILAQMVSLLKNGEPYKMSKRAGNFILMGDVLEELGSDVLRYIFISKKCDTHLEFDVDEFKKEDSSNPVYYINYAHARIHQVFAKAGKSVDDVMYAKFESLNEDGMNLLFESLNLKAVLNDAFESRSLQKIPDYLKNLASLFHKFYNENKVVGSDNEDEFLKLFAICALSIKIAFALMGIEAKNKMNHD.

The 'HIGH' region signature appears at 113–123 (ANPTGPLHIGH).

This sequence belongs to the class-I aminoacyl-tRNA synthetase family. In terms of assembly, monomer.

The protein localises to the cytoplasm. The catalysed reaction is tRNA(Arg) + L-arginine + ATP = L-arginyl-tRNA(Arg) + AMP + diphosphate. This is Arginine--tRNA ligase from Campylobacter lari (strain RM2100 / D67 / ATCC BAA-1060).